The sequence spans 256 residues: uncharacterized protein (256 aa).

Residues Ile-18, Ser-37, Lys-46, Asp-66, Tyr-164, Lys-168, Val-197, and Thr-199 each contribute to the NADP(+) site. The active-site Proton donor is the Tyr-164. The active-site Lowers pKa of active site Tyr is Lys-168.

This sequence belongs to the short-chain dehydrogenases/reductases (SDR) family.

Its subcellular location is the cytoplasm. This is an uncharacterized protein from Saccharomyces cerevisiae (strain ATCC 204508 / S288c) (Baker's yeast).